The primary structure comprises 159 residues: Ribosomal RNA large subunit methyltransferase H (159 aa).

Residues glycine 108 and 127–132 (FSKMTF) each bind S-adenosyl-L-methionine.

It belongs to the RNA methyltransferase RlmH family. In terms of assembly, homodimer.

Its subcellular location is the cytoplasm. The enzyme catalyses pseudouridine(1915) in 23S rRNA + S-adenosyl-L-methionine = N(3)-methylpseudouridine(1915) in 23S rRNA + S-adenosyl-L-homocysteine + H(+). Specifically methylates the pseudouridine at position 1915 (m3Psi1915) in 23S rRNA. The polypeptide is Ribosomal RNA large subunit methyltransferase H (Clostridium beijerinckii (strain ATCC 51743 / NCIMB 8052) (Clostridium acetobutylicum)).